Reading from the N-terminus, the 366-residue chain is Transcription factor IIIA (366 aa).

9 consecutive C2H2-type zinc fingers follow at residues 35 to 59, 65 to 89, 95 to 120, 127 to 151, 157 to 181, 184 to 210, 214 to 236, 243 to 268, and 274 to 298; these read YICS…LCKH, FPCK…SLTH, FTCD…NRFH, YVCH…QFSH, YECP…EKVH, YPCK…AECH, AVCD…QKTH, YLCP…QSFH, and FVCE…SVVH. The residue at position 38 (S38) is a Phosphoserine; by CK2. A compositionally biased stretch (basic and acidic residues) spans 299–310; sequence DPEKRKLKEKCP. The segment at 299–366 is disordered; that stretch reads DPEKRKLKEK…SLVLDKLTIQ (68 aa). Phosphoserine; by CK2; in vitro is present on S336.

The N-terminus is blocked. In terms of tissue distribution, synthesized in oocytes and, in much lower levels, in somatic cells.

It is found in the nucleus. In terms of biological role, involved in ribosomal large subunit biogenesis. Acts both as a positive transcription factor for 5S RNA genes, and as a specific RNA binding protein that complexes with 5S RNA in oocytes to form the 7S ribonucleoprotein storage particle. May play an essential role in the developmental change in 5S RNA gene expression. Interacts with the internal control region (ICR) of approximately 50 bases within the 5S RNA genes, is required for correct transcription of these genes by RNA polymerase III. Also binds the transcribed 5S RNA's. The protein is Transcription factor IIIA (gtf3a) of Xenopus laevis (African clawed frog).